A 331-amino-acid chain; its full sequence is Phospholipase A2 inhibitor (331 aa).

Residues 1–23 form the signal peptide; that stretch reads MKSSVPSLLIACLVMSLNSYTQQ. An N-linked (GlcNAc...) asparagine glycan is attached at Asn-35. LRR repeat units lie at residues 78 to 101, 103 to 125, 127 to 149, 150 to 173, 175 to 197, 199 to 221, 223 to 244, and 245 to 268; these read LPNL…LFRN, PQLH…IFTN, SSLI…WFQT, LGEL…CFDK, KKLT…MFSG, DNLE…TFHW, PKLT…FFQP, and LEQL…VYKT. An N-linked (GlcNAc...) asparagine glycan is attached at Asn-125. Residue Asn-232 is glycosylated (N-linked (GlcNAc...) asparagine). The N-linked (GlcNAc...) asparagine glycan is linked to Asn-271. Residues 279-330 form the LRRCT domain; the sequence is NPWACDCRLDNLLTWVNEHNIHLYSKEEIVCASPKHFKGECATSLHKSQICP.

Homotrimer.

Its subcellular location is the secreted. Its function is as follows. Inhibits the enzymatic activity of the basic phospholipase A2 (PLA2). The sequence is that of Phospholipase A2 inhibitor from Gloydius brevicaudus siniticus (Chinese mamushi).